A 336-amino-acid polypeptide reads, in one-letter code: Dihydroorotate dehydrogenase (quinone) (336 aa).

Residues 62–66 and T86 contribute to the FMN site; that span reads AGLDK. K66 is a binding site for substrate. 111 to 115 lines the substrate pocket; that stretch reads NRMGF. Positions 139 and 172 each coordinate FMN. N172 is a binding site for substrate. The active-site Nucleophile is S175. N177 contributes to the substrate binding site. K217 and T245 together coordinate FMN. 246 to 247 contributes to the substrate binding site; that stretch reads NT. FMN is bound by residues G268, G297, and 318-319; that span reads YS.

The protein belongs to the dihydroorotate dehydrogenase family. Type 2 subfamily. Monomer. FMN serves as cofactor.

It localises to the cell membrane. The enzyme catalyses (S)-dihydroorotate + a quinone = orotate + a quinol. Its pathway is pyrimidine metabolism; UMP biosynthesis via de novo pathway; orotate from (S)-dihydroorotate (quinone route): step 1/1. Catalyzes the conversion of dihydroorotate to orotate with quinone as electron acceptor. The protein is Dihydroorotate dehydrogenase (quinone) of Hamiltonella defensa subsp. Acyrthosiphon pisum (strain 5AT).